A 328-amino-acid chain; its full sequence is Ribosomal protein L11 methyltransferase (328 aa).

The S-adenosyl-L-methionine site is built by T158, G180, D202, and N246.

The protein belongs to the methyltransferase superfamily. PrmA family.

The protein localises to the cytoplasm. It catalyses the reaction L-lysyl-[protein] + 3 S-adenosyl-L-methionine = N(6),N(6),N(6)-trimethyl-L-lysyl-[protein] + 3 S-adenosyl-L-homocysteine + 3 H(+). Methylates ribosomal protein L11. The chain is Ribosomal protein L11 methyltransferase from Polynucleobacter necessarius subsp. necessarius (strain STIR1).